The primary structure comprises 762 residues: Chondroadherin-like protein (762 aa).

An N-terminal signal peptide occupies residues 1–30 (MEGPRSSTHVPLVLPLLVLLLLAPARQAAA). The region spanning 31-62 (QRCPQACICDNSRRHVACRYQNLTEVPDAIPE) is the LRRNT 1 domain. Asparagine 52 carries an N-linked (GlcNAc...) asparagine glycan. LRR repeat units lie at residues 87 to 108 (HLTHLDLRHCEVELVAEGAFRG), 111 to 132 (RLLLLNLASNHLRELPQEALDG), 135 to 156 (SLRRLELEGNALEELRPGTFGA), 159 to 180 (ALATLNLAHNALVYLPAMAFQG), 183 to 204 (RVRWLRLSHNALSVLAPEALAG), 207 to 228 (ALRRLSLHHNELQALPGPVLSQ), 231 to 252 (GLARLELGHNPLTYAGEEDGLA), 255 to 276 (GLRELLLDGGALQALGPRAFAH), and 279 to 300 (RLHTLDLRGNQLDTLPPLQGPG). The 50-residue stretch at 310-359 (NPLWCGCQARPLLEWLARARVRSDGACQGPRRLRGEALDALRPWDLRCPG) folds into the LRRCT 1 domain. The interval 364-390 (EEEELEERAVAGPRAPPRGPPRGPGEE) is disordered. A compositionally biased stretch (pro residues) spans 377-386 (RAPPRGPPRG). An LRRNT 2 domain is found at 387–425 (PGEERAVAPCPRACVCVPESRHSSCEGCGLQAVPRGFPS). Cysteine 396 and cysteine 411 are disulfide-bonded. 10 LRR repeats span residues 426 to 447 (DTQLLDLRRNHFPSVPRAAFPG), 450 to 471 (HLVSLHLQHCGIAELEAGALAG), 474 to 495 (RLIYLYLSDNQLAGLSAAALEG), 498 to 519 (RLGYLYLERNRFLQVPGAALRA), 522 to 543 (SLFSLHLQDNAVDRLAPGDLGR), 546 to 566 (ALRWVYLSGNRITEVSLGALG), 570 to 591 (ELEKLHLDRNQLREVPTGALEG), 594 to 615 (ALLELQLSGNPLRALRDGAFQP), 619 to 640 (SLQHLFLNSSGLEQICPGAFSG), and 644 to 665 (GLQSLHLQKNQLRALPALPSLS). Asparagine 626 is a glycosylation site (N-linked (GlcNAc...) asparagine). One can recognise an LRRCT 2 domain in the interval 675–724 (NPFHCDCQLLPLHRWLTGLNLRVGATCATPPNARGQRVKAAAAVFEDCPG). 2 cysteine pairs are disulfide-bonded: cysteine 679-cysteine 722 and cysteine 681-cysteine 701. Basic residues predominate over residues 728–745 (RKAKRTPASRPSARRTPI). The interval 728–762 (RKAKRTPASRPSARRTPIKGRQCGADKVGKEKGRL) is disordered.

The protein belongs to the small leucine-rich proteoglycan (SLRP) family. SLRP class IV subfamily. As to quaternary structure, associates with collagen and binds to collagen fibrils.

The protein resides in the secreted. The protein localises to the extracellular space. It localises to the extracellular matrix. Potential negative modulator of chondrocyte differentiation. Inhibits collagen fibrillogenesis in vitro. May influence chondrocyte's differentiation by acting on its cellular collagenous microenvironment. The chain is Chondroadherin-like protein (CHADL) from Homo sapiens (Human).